The primary structure comprises 88 residues: Large ribosomal subunit protein bL31B (88 aa).

This sequence belongs to the bacterial ribosomal protein bL31 family. Type B subfamily. As to quaternary structure, part of the 50S ribosomal subunit.

The protein is Large ribosomal subunit protein bL31B of Corynebacterium diphtheriae (strain ATCC 700971 / NCTC 13129 / Biotype gravis).